Here is a 231-residue protein sequence, read N- to C-terminus: MRLSPDEIIFWQHGFLKLNATIVFTWGLMLVLAVGSKLITRKLSTGLKRSRWQNLLEIVVTAIEKQIEEVGLRDPKKYLGFLGTLFLFVATASLCTVIPGYEPPTGSLSTTAALAFCVFVAVPFFGIKDQGLGGYLKSYVEPTVIMLPFNIISEISRTLALAVRLFGNMMSGAMIIGILLTITPFIFPIVMTALGLLTGMVQAYIFSILAAVYIAAATRGRKPKPEPGEKH.

Transmembrane regions (helical) follow at residues G14 to V34, Y78 to I98, S107 to I127, M174 to L194, and L196 to A216.

Belongs to the ATPase A chain family. In terms of assembly, F-type ATPases have 2 components, CF(1) - the catalytic core - and CF(0) - the membrane proton channel. CF(1) has five subunits: alpha(3), beta(3), gamma(1), delta(1), epsilon(1). CF(0) has three main subunits: a(1), b(2) and c(9-12). The alpha and beta chains form an alternating ring which encloses part of the gamma chain. CF(1) is attached to CF(0) by a central stalk formed by the gamma and epsilon chains, while a peripheral stalk is formed by the delta and b chains.

The protein resides in the cell inner membrane. Its function is as follows. Key component of the proton channel; it plays a direct role in the translocation of protons across the membrane. The protein is ATP synthase subunit a of Albidiferax ferrireducens (strain ATCC BAA-621 / DSM 15236 / T118) (Rhodoferax ferrireducens).